We begin with the raw amino-acid sequence, 363 residues long: 3-isopropylmalate dehydrogenase (363 aa).

78 to 91 serves as a coordination point for NAD(+); sequence GKKWDDLPINQRPE. Residues Arg99, Arg109, Arg138, and Asp227 each contribute to the substrate site. Positions 227, 251, and 255 each coordinate Mg(2+). 285–297 lines the NAD(+) pocket; sequence GSAPDIEGKNIAN.

The protein belongs to the isocitrate and isopropylmalate dehydrogenases family. LeuB type 1 subfamily. As to quaternary structure, homodimer. Requires Mg(2+) as cofactor. Mn(2+) is required as a cofactor.

It is found in the cytoplasm. It carries out the reaction (2R,3S)-3-isopropylmalate + NAD(+) = 4-methyl-2-oxopentanoate + CO2 + NADH. Its pathway is amino-acid biosynthesis; L-leucine biosynthesis; L-leucine from 3-methyl-2-oxobutanoate: step 3/4. Catalyzes the oxidation of 3-carboxy-2-hydroxy-4-methylpentanoate (3-isopropylmalate) to 3-carboxy-4-methyl-2-oxopentanoate. The product decarboxylates to 4-methyl-2 oxopentanoate. The polypeptide is 3-isopropylmalate dehydrogenase (Buchnera aphidicola subsp. Uroleucon rudbeckiae).